A 693-amino-acid polypeptide reads, in one-letter code: E3 ubiquitin-protein ligase MARCHF7 (693 aa).

Position 1 is an N-acetylmethionine (M1). Disordered stretches follow at residues 1 to 43 (MESK…RDSS), 69 to 136 (ESEI…LGSF), 158 to 281 (LMDY…RRTT), 296 to 342 (FFSR…EGRA), 361 to 430 (LSQN…RDSN), 445 to 475 (AANR…RNPG), and 512 to 533 (WNST…PEKL). 5 stretches are compositionally biased toward polar residues: residues 14–36 (VQPS…LNDS), 95–105 (SCTNCASTSAG), 112–132 (LNTV…SSMV), 167–184 (DFTT…SYSQ), and 192–215 (AVST…QTVP). A compositionally biased stretch (low complexity) spans 216-234 (SSRDSSRSSFRSHFSPRQS). A compositionally biased stretch (polar residues) spans 236-267 (SFRNSSHPAFSYFSSRNETPTISNSERGSSQR). The span at 268-279 (PYRESSDNEGRR) shows a compositional bias: basic and acidic residues. The segment covering 296–305 (FFSRRSSQDS) has biased composition (low complexity). Polar residues predominate over residues 306-323 (LNTRSLSSENYISPRTLT). At S318 the chain carries Phosphoserine. Low complexity predominate over residues 324 to 337 (SQSRNNGTSSSSDV). S390 is modified (phosphoserine). The span at 451–463 (ASGASSSAAAGGS) shows a compositional bias: low complexity. Residues 517 to 533 (GKNDKAKSAPSRDPEKL) are compositionally biased toward basic and acidic residues. The RING-CH-type zinc finger occupies 546-616 (DDEEEGDLCR…ELCKEKLQLN (71 aa)). The Zn(2+) site is built by C554, C557, C572, C574, H582, C585, C606, and C609. Phosphothreonine is present on T688. S689 carries the post-translational modification Phosphoserine.

As to expression, expressed in brain, thymus, muscle and kidney.

The protein localises to the cytoplasm. The enzyme catalyses S-ubiquitinyl-[E2 ubiquitin-conjugating enzyme]-L-cysteine + [acceptor protein]-L-lysine = [E2 ubiquitin-conjugating enzyme]-L-cysteine + N(6)-ubiquitinyl-[acceptor protein]-L-lysine.. It functions in the pathway protein modification; protein ubiquitination. In terms of biological role, E3 ubiquitin-protein ligase which may specifically enhance the E2 activity of HIP2. E3 ubiquitin ligases accept ubiquitin from an E2 ubiquitin-conjugating enzyme in the form of a thioester and then directly transfer the ubiquitin to targeted substrates. May be involved in T-cell proliferation by regulating LIF secretion. May play a role in lysosome homeostasis. Promotes 'Lys-6', 'Lys-11' and 'Lys-63'-linked mixed polyubiquitination on ATG14 leading to the inhibition of autophagy by impairing the interaction between ATG14 and STX7. Participates in the dopamine-mediated negative regulation of the NLRP3 inflammasome by promoting its uibiquitination and subsequent degradation. This is E3 ubiquitin-protein ligase MARCHF7 (Marchf7) from Mus musculus (Mouse).